The following is a 582-amino-acid chain: ATP-dependent lipid A-core flippase (582 aa).

Helical transmembrane passes span 16-36 (LWPT…ALIL), 64-84 (LMWM…TSYI), 153-173 (IIGL…ILIV), 253-273 (PIIQ…ASFP), and 275-295 (VMDS…IALM). One can recognise an ABC transmembrane type-1 domain in the interval 28–310 (IVAGVALILN…LTNVNAQFQR (283 aa)). Residues 342-578 (VEFRNVTFTY…RGVYAQLHKM (237 aa)) form the ABC transporter domain. 376–383 (GRSGSGKS) serves as a coordination point for ATP.

Belongs to the ABC transporter superfamily. Lipid exporter (TC 3.A.1.106) family. Homodimer.

Its subcellular location is the cell inner membrane. It carries out the reaction ATP + H2O + lipid A-core oligosaccharideSide 1 = ADP + phosphate + lipid A-core oligosaccharideSide 2.. Its function is as follows. Involved in lipopolysaccharide (LPS) biosynthesis. Translocates lipid A-core from the inner to the outer leaflet of the inner membrane. Transmembrane domains (TMD) form a pore in the inner membrane and the ATP-binding domain (NBD) is responsible for energy generation. This Escherichia coli O6:K15:H31 (strain 536 / UPEC) protein is ATP-dependent lipid A-core flippase.